The sequence spans 87 residues: U14-lycotoxin-Ls1a (87 aa).

Residues 1-20 (MNSKVFAVLLLLALSTCVLS) form the signal peptide. Residues 21–66 (EKYCPTPRNTSCKKMNIRNNCCRDSDCTSNAFCCAEPCGNFCHKAS) enclose the WAP domain. 5 cysteine pairs are disulfide-bonded: Cys24-Cys54, Cys32-Cys58, Cys41-Cys53, Cys42-Cys80, and Cys47-Cys62.

This sequence belongs to the venom protein 11 family. 01 (wap-1) subfamily. Contains 5 disulfide bonds. Expressed by the venom gland.

The protein resides in the secreted. In terms of biological role, has antibacterial activity. The polypeptide is U14-lycotoxin-Ls1a (Lycosa singoriensis (Wolf spider)).